Consider the following 244-residue polypeptide: 14-3-3 protein homolog 1 (244 aa).

The protein belongs to the 14-3-3 family.

The chain is 14-3-3 protein homolog 1 from Echinococcus multilocularis (Fox tapeworm).